Here is a 915-residue protein sequence, read N- to C-terminus: DNA repair-scaffolding protein (915 aa).

Residues 1 to 15 (MPRGSRARGSKRKRS) show a composition bias toward basic residues. 2 disordered regions span residues 1–30 (MPRG…RPLQ) and 56–114 (FQNT…EDKT). Polar residues predominate over residues 56–65 (FQNTSGNPSL). Residues 67–85 (AEEKTITEKHLELCPRPKQ) show a composition bias toward basic and acidic residues. Residues 86–107 (ETTTSKSTSGLTDITWSSSGSD) are compositionally biased toward polar residues. A necessary for interaction with RAD51 region spans residues 151–450 (EISDCASCAS…GTAWTHGHKE (300 aa)).

Found in a complex, at least composed of BLM, RAD51 and SPIDR; the complex formation is mediated by SPIDR. Interacts (via C-terminal region) with BLM; the interaction is direct. Interacts with RAD51; the interaction is direct. Interacts (via the C-terminal region) with FIGNL1 (via N-terminal one-half region); the interaction is direct.

The protein localises to the nucleus. Plays a role in DNA double-strand break (DBS) repair via homologous recombination (HR). Serves as a scaffolding protein that helps to promote the recruitment of DNA-processing enzymes like the helicase BLM and recombinase RAD51 to site of DNA damage, and hence contributes to maintain genomic integrity. This Homo sapiens (Human) protein is DNA repair-scaffolding protein (SPIDR).